A 693-amino-acid polypeptide reads, in one-letter code: DNA ligase (693 aa).

NAD(+) is bound by residues 35-39, 84-85, and Glu-121; these read DAEYD and SI. The N6-AMP-lysine intermediate role is filled by Lys-123. NAD(+)-binding residues include Arg-144, Glu-180, Lys-297, and Lys-321. Residues Cys-418, Cys-421, Cys-436, and Cys-442 each contribute to the Zn(2+) site. Residues 601–690 enclose the BRCT domain; it reads PASGSVAGLT…EQSPINNKDG (90 aa).

Belongs to the NAD-dependent DNA ligase family. LigA subfamily. Mg(2+) serves as cofactor. It depends on Mn(2+) as a cofactor.

It carries out the reaction NAD(+) + (deoxyribonucleotide)n-3'-hydroxyl + 5'-phospho-(deoxyribonucleotide)m = (deoxyribonucleotide)n+m + AMP + beta-nicotinamide D-nucleotide.. Its function is as follows. DNA ligase that catalyzes the formation of phosphodiester linkages between 5'-phosphoryl and 3'-hydroxyl groups in double-stranded DNA using NAD as a coenzyme and as the energy source for the reaction. It is essential for DNA replication and repair of damaged DNA. This chain is DNA ligase, found in Azoarcus sp. (strain BH72).